A 365-amino-acid chain; its full sequence is Chorismate synthase (365 aa).

Arg48 contributes to the NADP(+) binding site. FMN contacts are provided by residues 130–132, 242–243, Gly290, 305–309, and Arg331; these read RSS, NA, and KPTSS.

Belongs to the chorismate synthase family. As to quaternary structure, homotetramer. FMNH2 is required as a cofactor.

It catalyses the reaction 5-O-(1-carboxyvinyl)-3-phosphoshikimate = chorismate + phosphate. It functions in the pathway metabolic intermediate biosynthesis; chorismate biosynthesis; chorismate from D-erythrose 4-phosphate and phosphoenolpyruvate: step 7/7. Its function is as follows. Catalyzes the anti-1,4-elimination of the C-3 phosphate and the C-6 proR hydrogen from 5-enolpyruvylshikimate-3-phosphate (EPSP) to yield chorismate, which is the branch point compound that serves as the starting substrate for the three terminal pathways of aromatic amino acid biosynthesis. This reaction introduces a second double bond into the aromatic ring system. The sequence is that of Chorismate synthase from Erythrobacter litoralis (strain HTCC2594).